Reading from the N-terminus, the 383-residue chain is Mannan endo-1,4-beta-mannosidase A (383 aa).

The first 18 residues, 1–18, serve as a signal peptide directing secretion; the sequence is MKFSQALLSLASLALAAA. A glycan (N-linked (GlcNAc...) asparagine) is linked at Asn75. Trp97 provides a ligand contact to substrate. Residue Asn199 is glycosylated (N-linked (GlcNAc...) asparagine). Residues Asn210 and 211 to 213 each bind substrate; that span reads EPR. Glu211 serves as the catalytic Proton donor/acceptor. Cys214 and Cys217 are oxidised to a cystine. Residues Tyr279 and Trp283 each coordinate substrate. A disulfide bond links Cys301 and Cys308. Glu312 acts as the Nucleophile in catalysis. A disulfide bridge links Cys320 with Cys369. Residue Asn332 is glycosylated (N-linked (GlcNAc...) asparagine). A substrate-binding site is contributed by Trp342.

Belongs to the glycosyl hydrolase 5 (cellulase A) family. In terms of assembly, monomer.

Its subcellular location is the secreted. The catalysed reaction is Random hydrolysis of (1-&gt;4)-beta-D-mannosidic linkages in mannans, galactomannans and glucomannans.. Functionally, endo-1,4-mannanase that catalyzes the random hydrolysis of (1-&gt;4)-beta-D-mannosidic linkages in mannans and heteromannans. It is a crucial enzyme for depolymerization of seed galactomannans and wood galactoglucomannans. Active against locust bean gum and gum guar. Also has transglycosylation activity. The protein is Mannan endo-1,4-beta-mannosidase A (manA) of Emericella nidulans (strain FGSC A4 / ATCC 38163 / CBS 112.46 / NRRL 194 / M139) (Aspergillus nidulans).